The primary structure comprises 587 residues: Lipoprotein LpqB (587 aa).

The signal sequence occupies residues M1–G19. Residue C20 is the site of N-palmitoyl cysteine attachment. C20 is lipidated: S-diacylglycerol cysteine.

It belongs to the LpqB lipoprotein family. As to quaternary structure, interacts with MtrB, probably extracytoplasmically.

The protein resides in the cell membrane. Its subcellular location is the secreted. It localises to the cell wall. May modulate activity of the MtrAB system in controlling homeostasis of the cell wall and cell division. The polypeptide is Lipoprotein LpqB (Mycobacterium tuberculosis (strain CDC 1551 / Oshkosh)).